We begin with the raw amino-acid sequence, 1377 residues long: Carboxypeptidase D (1377 aa).

The first 37 residues, Met1 to Ala37, serve as a signal peptide directing secretion. The Extracellular segment spans residues Ala38–Glu1296. A Peptidase M14 1 domain is found at His62–Val379. Zn(2+) is bound by residues His138 and Glu141. Positions Arg161 to Asp163 match the Cell attachment site motif. 2 N-linked (GlcNAc...) asparagine glycosylation sites follow: Asn171 and Asn216. Residues Arg188–Leu231 form a disordered region. Residue His256 participates in Zn(2+) binding. Tyr264 is subject to Phosphotyrosine. Position 269 is a phosphoserine (Ser269). Glu349 (proton donor/acceptor) is an active-site residue. 4 N-linked (GlcNAc...) asparagine glycosylation sites follow: Asn398, Asn409, Asn428, and Asn521. In terms of domain architecture, Peptidase M14 2 spans His501–Val791. 2 residues coordinate Zn(2+): His563 and Glu566. Residue Asn625 is glycosylated (N-linked (GlcNAc...) asparagine). His670 contributes to the Zn(2+) binding site. Glu761 functions as the Proton donor/acceptor in the catalytic mechanism. N-linked (GlcNAc...) asparagine glycans are attached at residues Asn810, Asn854, Asn866, Asn878, Asn952, and Asn975. The tract at residues Ala874–Ser898 is disordered. Positions Arg929–Val1208 constitute a Peptidase M14 3 domain. Residues Arg1038–Thr1047 show a composition bias toward basic and acidic residues. Positions Arg1038 to Phe1064 are disordered. Residues Asn1067 and Asn1139 are each glycosylated (N-linked (GlcNAc...) asparagine). Residues Leu1297–Trp1317 traverse the membrane as a helical segment. 3 S-palmitoyl cysteine lipidation sites follow: Cys1314, Cys1318, and Cys1320. Residues Cys1318–His1377 lie on the Cytoplasmic side of the membrane. Residues Ser1355 and Ser1358 each carry the phosphoserine modification. The interval Leu1356–His1377 is disordered. A phosphothreonine mark is found at Thr1365 and Thr1367.

This sequence belongs to the peptidase M14 family. The cofactor is Zn(2+).

It is found in the cell membrane. It catalyses the reaction Releases C-terminal Arg and Lys from polypeptides.. The protein is Carboxypeptidase D (Cpd) of Mus musculus (Mouse).